The chain runs to 548 residues: Phosphoglucomutase (548 aa).

The active-site Phosphoserine intermediate is Ser135. Mg(2+) contacts are provided by Ser135, Asp288, Asp290, and Asp292.

It belongs to the phosphohexose mutase family. Requires Mg(2+) as cofactor.

It catalyses the reaction alpha-D-glucose 1-phosphate = alpha-D-glucose 6-phosphate. Its pathway is glycolipid metabolism; diglucosyl-diacylglycerol biosynthesis. Its function is as follows. Catalyzes the interconversion between glucose-6-phosphate and alpha-glucose-1-phosphate. This is the first step in the biosynthesis of diglucosyl-diacylglycerol (Glc2-DAG), i.e. a glycolipid found in the membrane, which is also used as a membrane anchor for lipoteichoic acid (LTA). The sequence is that of Phosphoglucomutase (pgcA) from Staphylococcus haemolyticus (strain JCSC1435).